Reading from the N-terminus, the 493-residue chain is Glutamyl-tRNA(Gln) amidotransferase subunit A (493 aa).

Residues lysine 78 and serine 158 each act as charge relay system in the active site. Serine 182 functions as the Acyl-ester intermediate in the catalytic mechanism.

It belongs to the amidase family. GatA subfamily. In terms of assembly, heterotrimer of A, B and C subunits.

It carries out the reaction L-glutamyl-tRNA(Gln) + L-glutamine + ATP + H2O = L-glutaminyl-tRNA(Gln) + L-glutamate + ADP + phosphate + H(+). In terms of biological role, allows the formation of correctly charged Gln-tRNA(Gln) through the transamidation of misacylated Glu-tRNA(Gln) in organisms which lack glutaminyl-tRNA synthetase. The reaction takes place in the presence of glutamine and ATP through an activated gamma-phospho-Glu-tRNA(Gln). In Rickettsia rickettsii (strain Iowa), this protein is Glutamyl-tRNA(Gln) amidotransferase subunit A.